The following is a 759-amino-acid chain: MPAPKLTEKFASSKSTQKTTNYSSIEAKSVKTSADQAYIYQEPSATKKILYSIATWLLYNIFHCFFREIRGRGSFKVPQQGPVIFVAAPHANQFVDPVILMGEVKKSVNRRVSFLIAESSLKQPPIGFLASFFMAIGVVRPQDNLKPAEGTIRVDPTDYKRVIGHDTHFLTDCMPKGLIGLPKSMGFGEIQSIESDTSLTLRKEFKMAKPEIKTALLTGTTYKYAAKVDQSCVYHRVFEHLAHNNCIGIFPEGGSHDRTNLLPLKAGVAIMALGCMDKHPDVNVKIVPCGMNYFHPHKFRSRAVVEFGDPIEIPKELVAKYHNPETNRDAVKELLDTISKGLQSVTVTCSDYETLMVVQTIRRLYMTQFSTKLPLPLIVEMNRRMVKGYEFYRNDPKIADLTKDIMAYNAALRHYNLPDHLVEEAKVNFAKNLGLVFFRSIGLCILFSLAMPGIIMFSPVFILAKRISQEKARTALSKSTVKIKANDVIATWKILIGMGFAPLLYIFWSVLITYYLRHKPWNKIYVFSGSYISCVIVTYSALIVGDIGMDGFKSLRPLVLSLTSPKGLQKLQKDRRNLAERIIEVVNNFGSELFPDFDSAALREEFDVIDEEEEDRKTSELNRRKMLRKQKIKRQEKDSSSPIISQRDNHDAYEHHNQDSDGVSLVNSDNSLSNIPLFSSTFHRKSESSLASTSVAPSSSSEFEVENEILEEKNGLASKIAQAVLNKRIGENTAREEEEEEEEEEEEEEEEEEGKEGDA.

Residues 1–48 (MPAPKLTEKFASSKSTQKTTNYSSIEAKSVKTSADQAYIYQEPSATKK) lie on the Lumenal side of the membrane. A helical transmembrane segment spans residues 49–69 (ILYSIATWLLYNIFHCFFREI). The Cytoplasmic portion of the chain corresponds to 70 to 434 (RGRGSFKVPQ…AKVNFAKNLG (365 aa)). The HXXXXD motif motif lies at 414–419 (HYNLPD). A helical transmembrane segment spans residues 435 to 449 (LVFFRSIGLCILFSL). Residue Ala450 is a topological domain, lumenal. The chain crosses the membrane as a helical span at residues 451–465 (MPGIIMFSPVFILAK). At 466-493 (RISQEKARTALSKSTVKIKANDVIATWK) the chain is on the cytoplasmic side. The helical transmembrane segment at 494-514 (ILIGMGFAPLLYIFWSVLITY) threads the bilayer. Over 515-523 (YLRHKPWNK) the chain is Lumenal. A helical transmembrane segment spans residues 524–544 (IYVFSGSYISCVIVTYSALIV). Residues 545–759 (GDIGMDGFKS…EEEEGKEGDA (215 aa)) lie on the Cytoplasmic side of the membrane. 3 disordered regions span residues 613 to 667 (EEDR…SLVN), 684 to 705 (RKSESSLASTSVAPSSSSEFEV), and 729 to 759 (IGENTAREEEEEEEEEEEEEEEEEEGKEGDA). The span at 647–659 (RDNHDAYEHHNQD) shows a compositional bias: basic and acidic residues. Positions 688–702 (SSLASTSVAPSSSSE) are enriched in low complexity. Residues 736–759 (EEEEEEEEEEEEEEEEEEGKEGDA) show a composition bias toward acidic residues.

The protein belongs to the GPAT/DAPAT family.

It is found in the endoplasmic reticulum membrane. It catalyses the reaction sn-glycerol 3-phosphate + an acyl-CoA = a 1-acyl-sn-glycero-3-phosphate + CoA. The enzyme catalyses dihydroxyacetone phosphate + an acyl-CoA = a 1-acylglycerone 3-phosphate + CoA. The catalysed reaction is sn-glycerol 3-phosphate + hexadecanoyl-CoA = 1-hexadecanoyl-sn-glycero-3-phosphate + CoA. It carries out the reaction (9Z)-hexadecenoyl-CoA + sn-glycerol 3-phosphate = 1-(9Z-hexadecenoyl)-sn-glycero-3-phosphate + CoA. It catalyses the reaction sn-glycerol 3-phosphate + octadecanoyl-CoA = 1-octadecanoyl-sn-glycero-3-phosphate + CoA. The enzyme catalyses sn-glycerol 3-phosphate + (9Z)-octadecenoyl-CoA = 1-(9Z-octadecenoyl)-sn-glycero-3-phosphate + CoA. Its pathway is phospholipid metabolism; CDP-diacylglycerol biosynthesis; CDP-diacylglycerol from sn-glycerol 3-phosphate: step 1/3. Functionally, dual substrate-specific glycerol-3-phosphate/dihydroxyacetone phosphate sn-1 acyltransferase, catalyzing the first and committed reaction in the de novo synthesis of glycerophospholipids and triacylglycerols (TAGs). Prefers Gly-3-P over dihydroxyacetone phosphate and has a marked preference for 16-carbon fatty acyl chains. Transfers a fatty acid from fatty acyl-CoA to the sn-1 position of glycerol-3-phosphate to produce lysophosphatidic acid (LysoPA). These lipids not only are precursors of glycerolipids, but also are dynamic components of signal transduction systems that control cell physiology. SCT1 is the primary supplier of diacylglycerols (DAG), used mainly in TAG synthesis and phosphatidylcholine (PC) synthesis through the CDP-choline pathway. Regulates fatty acid desaturation, that is, the ratio of unsaturated versus saturated fatty acyl chains, by competing with the desaturase OLE1 for the common substrate C16:0-CoA. Sequesters C16:0-CoA into lipids, thereby shielding it from desaturation by OLE1. This chain is Glycerol-3-phosphate O-acyltransferase 1, found in Saccharomyces cerevisiae (strain ATCC 204508 / S288c) (Baker's yeast).